The sequence spans 408 residues: 1-deoxy-D-xylulose 5-phosphate reductoisomerase (408 aa).

NADPH is bound by residues T19, G20, S21, I22, G45, N47, and N130. Residue K131 coordinates 1-deoxy-D-xylulose 5-phosphate. Residue E132 participates in NADPH binding. D156 contacts Mn(2+). 1-deoxy-D-xylulose 5-phosphate contacts are provided by S157, E158, S182, and H205. Mn(2+) is bound at residue E158. G211 is an NADPH binding site. 1-deoxy-D-xylulose 5-phosphate-binding residues include S218, N223, K224, and E227. E227 contributes to the Mn(2+) binding site.

Belongs to the DXR family. Mg(2+) is required as a cofactor. The cofactor is Mn(2+).

It catalyses the reaction 2-C-methyl-D-erythritol 4-phosphate + NADP(+) = 1-deoxy-D-xylulose 5-phosphate + NADPH + H(+). It participates in isoprenoid biosynthesis; isopentenyl diphosphate biosynthesis via DXP pathway; isopentenyl diphosphate from 1-deoxy-D-xylulose 5-phosphate: step 1/6. In terms of biological role, catalyzes the NADPH-dependent rearrangement and reduction of 1-deoxy-D-xylulose-5-phosphate (DXP) to 2-C-methyl-D-erythritol 4-phosphate (MEP). The protein is 1-deoxy-D-xylulose 5-phosphate reductoisomerase of Gluconobacter oxydans (strain 621H) (Gluconobacter suboxydans).